We begin with the raw amino-acid sequence, 203 residues long: Translation initiation factor IF-3 (203 aa).

A disordered region spans residues 168–203; that stretch reads QLSPKKKESATKKPATPKPATPAAVKAEKPAGDNEE. Basic and acidic residues predominate over residues 193-203; the sequence is KAEKPAGDNEE.

This sequence belongs to the IF-3 family. Monomer.

The protein localises to the cytoplasm. In terms of biological role, IF-3 binds to the 30S ribosomal subunit and shifts the equilibrium between 70S ribosomes and their 50S and 30S subunits in favor of the free subunits, thus enhancing the availability of 30S subunits on which protein synthesis initiation begins. The polypeptide is Translation initiation factor IF-3 (Bacteroides fragilis (strain ATCC 25285 / DSM 2151 / CCUG 4856 / JCM 11019 / LMG 10263 / NCTC 9343 / Onslow / VPI 2553 / EN-2)).